A 450-amino-acid polypeptide reads, in one-letter code: N-lysine methyltransferase SETD6 (450 aa).

Positions Met1–Val10 are enriched in basic residues. The disordered stretch occupies residues Met1–Pro20. Residues Pro39–Gly263 enclose the SET domain. Position 40 is an N6-methylated lysine; by autocatalysis (Lys40). S-adenosyl-L-methionine is bound at residue Ala50–Tyr52. Residue Trp99 participates in substrate binding. The residue at position 156 (Lys156) is an N6-methylated lysine; by autocatalysis. Position 200 (Tyr200) interacts with S-adenosyl-L-methionine. Substrate contacts are provided by Ser201 and Gln203. S-adenosyl-L-methionine-binding positions include Asn228–His229 and Tyr274. Lys349 is subject to N6-methylated lysine; by autocatalysis.

This sequence belongs to the class V-like SAM-binding methyltransferase superfamily. Histone-lysine methyltransferase family. SETD6 subfamily. In terms of assembly, monomer, homodimer and homotrimer; these structures are stabilized in the presence of S-adenosyl-L-methionine (SAM). Automethylated.

Its subcellular location is the nucleus. It catalyses the reaction L-lysyl-[protein] + S-adenosyl-L-methionine = N(6)-methyl-L-lysyl-[protein] + S-adenosyl-L-homocysteine + H(+). It carries out the reaction L-lysyl(8)-[histone H2AZ] + S-adenosyl-L-methionine = N(6)-methyl-L-lysyl(8)-[histone H2AZ] + S-adenosyl-L-homocysteine + H(+). Its function is as follows. Protein-lysine N-methyltransferase. Monomethylates 'Lys-310' of the RELA subunit of NF-kappa-B complex, leading to down-regulation of NF-kappa-B transcription factor activity. Monomethylates 'Lys-8' of H2AZ (H2AZK8me1). Required for the maintenance of embryonic stem cell self-renewal. Methylates PAK4. The sequence is that of N-lysine methyltransferase SETD6 (SETD6) from Bos taurus (Bovine).